The sequence spans 445 residues: Glycerophosphocholine choline phosphodiesterase ENPP6 (445 aa).

An N-terminal signal peptide occupies residues Met-1–Ala-22. Residues Asp-32, Ser-71, and Asn-92 each contribute to the substrate site. 2 residues coordinate Zn(2+): Asp-32 and Ser-71. Ser-71 functions as the Nucleophile in the catalytic mechanism. At Ser-71 the chain carries Phosphoserine. Asn-100 and Asn-118 each carry an N-linked (GlcNAc...) asparagine glycan. Cysteines 142 and 154 form a disulfide. Residue Asp-193 participates in substrate binding. Residues Asp-193, His-197, Asp-240, and His-241 each coordinate Zn(2+). His-241 contributes to the substrate binding site. Asn-341 carries N-linked (GlcNAc...) asparagine glycosylation. His-356 provides a ligand contact to substrate. His-356 contributes to the Zn(2+) binding site. An N-linked (GlcNAc...) asparagine glycan is attached at Asn-406. A lipid anchor (GPI-anchor amidated serine) is attached at Ser-421. The propeptide at Ser-422 to Ala-445 is removed in mature form.

It belongs to the nucleotide pyrophosphatase/phosphodiesterase family. As to quaternary structure, homodimer; disulfide-linked. Homotetramer. It depends on Zn(2+) as a cofactor.

Its subcellular location is the cell membrane. It carries out the reaction sn-glycerol 3-phosphocholine + H2O = phosphocholine + glycerol + H(+). The enzyme catalyses a 1-acyl-sn-glycero-3-phosphocholine + H2O = a 1-acyl-sn-glycerol + phosphocholine + H(+). It catalyses the reaction a 1-O-alkyl-sn-glycero-3-phosphocholine + H2O = a 1-O-alkyl-sn-glycerol + phosphocholine + H(+). The catalysed reaction is 1-dodecanoyl-sn-glycero-3-phosphocholine + H2O = 1-dodecanoyl-sn-glycerol + phosphocholine + H(+). It carries out the reaction 1-hexadecanoyl-sn-glycero-3-phosphocholine + H2O = 1-hexadecanoyl-sn-glycerol + phosphocholine + H(+). The enzyme catalyses 1-(5Z,8Z,11Z,14Z-eicosatetraenoyl)-sn-glycero-3-phosphocholine + H2O = 1-(5Z,8Z,11Z,14Z-eicosatetraenoyl)-sn-glycerol + phosphocholine + H(+). It catalyses the reaction 1-tetradecanoyl-sn-glycero-3-phosphocholine + H2O = 1-tetradecanoyl-sn-glycerol + phosphocholine + H(+). The catalysed reaction is sphing-4-enine-phosphocholine + H2O = sphing-4-enine + phosphocholine + H(+). It carries out the reaction 1-(9Z-octadecenoyl)-sn-glycero-3-phosphocholine + H2O = 1-(9Z-octadecenoyl)-sn-glycerol + phosphocholine + H(+). The enzyme catalyses 1-(9Z,12Z)-octadecadienoyl-sn-glycero-3-phosphocholine + H2O = 1-(9Z,12Z-octadecadienoyl)-sn-glycerol + phosphocholine + H(+). It catalyses the reaction glycero-2-phosphocholine + H2O = phosphocholine + glycerol + H(+). With respect to regulation, inhibited by EDTA and EGTA in vitro. Its function is as follows. Choline-specific glycerophosphodiesterase that hydrolyzes glycerophosphocholine (GPC) and lysophosphatidylcholine (LPC) and contributes to supplying choline to the cells. Has a preference for LPC with short (12:0 and 14:0) or polyunsaturated (18:2 and 20:4) fatty acids. In vitro, hydrolyzes only choline-containing lysophospholipids, such as sphingosylphosphorylcholine (SPC), platelet-activating factor (PAF) and lysoPAF, but not other lysophospholipids. This is Glycerophosphocholine choline phosphodiesterase ENPP6 from Bos taurus (Bovine).